An 834-amino-acid polypeptide reads, in one-letter code: Periplasmic nitrate reductase (834 aa).

The tat-type signal signal peptide spans 1 to 31 (MTGELTRREMLKAHAAGIAAATAGIALPAAA). In terms of domain architecture, 4Fe-4S Mo/W bis-MGD-type spans 43–99 (ITWSKAPCRFCGTGCGVMVGVKEGQVVATHGDMQAEVNRGLNCIKGYFLSKIMYGTD). [4Fe-4S] cluster is bound by residues cysteine 50, cysteine 53, cysteine 57, and cysteine 85. Residues lysine 87, glutamine 154, asparagine 179, cysteine 183, 216-223 (WGSNMAEM), 247-251 (STFTH), 266-268 (GTD), methionine 377, glutamine 381, asparagine 487, 513-514 (SD), lysine 536, aspartate 563, and 723-732 (TGRVLEHWHS) each bind Mo-bis(molybdopterin guanine dinucleotide). Position 799 (tryptophan 799) interacts with substrate. Mo-bis(molybdopterin guanine dinucleotide) is bound by residues asparagine 807 and lysine 824.

The protein belongs to the prokaryotic molybdopterin-containing oxidoreductase family. NasA/NapA/NarB subfamily. Component of the periplasmic nitrate reductase NapAB complex composed of NapA and NapB. The cofactor is [4Fe-4S] cluster. Requires Mo-bis(molybdopterin guanine dinucleotide) as cofactor. Post-translationally, predicted to be exported by the Tat system. The position of the signal peptide cleavage has not been experimentally proven.

It is found in the periplasm. The catalysed reaction is 2 Fe(II)-[cytochrome] + nitrate + 2 H(+) = 2 Fe(III)-[cytochrome] + nitrite + H2O. In terms of biological role, catalytic subunit of the periplasmic nitrate reductase complex NapAB. Receives electrons from NapB and catalyzes the reduction of nitrate to nitrite. The polypeptide is Periplasmic nitrate reductase (Rhizobium meliloti (strain 1021) (Ensifer meliloti)).